Here is a 324-residue protein sequence, read N- to C-terminus: Viral cathepsin (324 aa).

A signal peptide spans 1–18 (MNKIVLYLLIYVGTFSAA). A propeptide spans 19-113 (YDLLKAPSYF…VVLNRPPDKG (95 aa)) (activation peptide). 3 disulfide bridges follow: cysteine 134/cysteine 175, cysteine 168/cysteine 208, and cysteine 263/cysteine 311. The active site involves cysteine 137. Residue asparagine 159 is glycosylated (N-linked (GlcNAc...) asparagine; by host). Residues histidine 270 and asparagine 290 contribute to the active site.

The protein belongs to the peptidase C1 family. In terms of processing, synthesized as an inactive proenzyme and activated by proteolytic removal of the inhibitory propeptide.

The catalysed reaction is Endopeptidase of broad specificity, hydrolyzing substrates of both cathepsin L and cathepsin B.. Cysteine protease that plays an essential role in host liquefaction to facilitate horizontal transmission of the virus. May participate in the degradation of foreign protein expressed by the baculovirus system. The chain is Viral cathepsin (Vcath) from Choristoneura fumiferana defective polyhedrosis virus (Cfdef).